A 230-amino-acid chain; its full sequence is MAHPSQLGFQDAASPVMEELLHFHDHTLMIVFLISTLVLYIIMAMVSTKLTNKYILDSQEIEIVWTILPAVILIMIALPSLRILYLMDEINDPHLTIKAMGHQWYWSYEYTDYEDLGFDSYMIQTQDLTPGQFRLLETDHRMVVPMESPIRVLVSAEDVLHSWTVPALGVKMDAVPGRLNQTAFIISRPGVYYGQCSEICGANHSFMPIVVEAVPLEHFESWSSLMLEEA.

At 1-14 (MAHPSQLGFQDAAS) the chain is on the mitochondrial intermembrane side. A helical transmembrane segment spans residues 15-45 (PVMEELLHFHDHTLMIVFLISTLVLYIIMAM). Residues 46–59 (VSTKLTNKYILDSQ) are Mitochondrial matrix-facing. A helical membrane pass occupies residues 60–87 (EIEIVWTILPAVILIMIALPSLRILYLM). Topologically, residues 88-230 (DEINDPHLTI…SWSSLMLEEA (143 aa)) are mitochondrial intermembrane. Cu cation is bound by residues H161, C196, E198, C200, H204, and M207. Residue E198 coordinates Mg(2+).

The protein belongs to the cytochrome c oxidase subunit 2 family. Component of the cytochrome c oxidase (complex IV, CIV), a multisubunit enzyme composed of 14 subunits. The complex is composed of a catalytic core of 3 subunits MT-CO1, MT-CO2 and MT-CO3, encoded in the mitochondrial DNA, and 11 supernumerary subunits COX4I, COX5A, COX5B, COX6A, COX6B, COX6C, COX7A, COX7B, COX7C, COX8 and NDUFA4, which are encoded in the nuclear genome. The complex exists as a monomer or a dimer and forms supercomplexes (SCs) in the inner mitochondrial membrane with NADH-ubiquinone oxidoreductase (complex I, CI) and ubiquinol-cytochrome c oxidoreductase (cytochrome b-c1 complex, complex III, CIII), resulting in different assemblies (supercomplex SCI(1)III(2)IV(1) and megacomplex MCI(2)III(2)IV(2)). Found in a complex with TMEM177, COA6, COX18, COX20, SCO1 and SCO2. Interacts with TMEM177 in a COX20-dependent manner. Interacts with COX20. Interacts with COX16. Cu cation serves as cofactor.

Its subcellular location is the mitochondrion inner membrane. It carries out the reaction 4 Fe(II)-[cytochrome c] + O2 + 8 H(+)(in) = 4 Fe(III)-[cytochrome c] + 2 H2O + 4 H(+)(out). In terms of biological role, component of the cytochrome c oxidase, the last enzyme in the mitochondrial electron transport chain which drives oxidative phosphorylation. The respiratory chain contains 3 multisubunit complexes succinate dehydrogenase (complex II, CII), ubiquinol-cytochrome c oxidoreductase (cytochrome b-c1 complex, complex III, CIII) and cytochrome c oxidase (complex IV, CIV), that cooperate to transfer electrons derived from NADH and succinate to molecular oxygen, creating an electrochemical gradient over the inner membrane that drives transmembrane transport and the ATP synthase. Cytochrome c oxidase is the component of the respiratory chain that catalyzes the reduction of oxygen to water. Electrons originating from reduced cytochrome c in the intermembrane space (IMS) are transferred via the dinuclear copper A center (CU(A)) of subunit 2 and heme A of subunit 1 to the active site in subunit 1, a binuclear center (BNC) formed by heme A3 and copper B (CU(B)). The BNC reduces molecular oxygen to 2 water molecules using 4 electrons from cytochrome c in the IMS and 4 protons from the mitochondrial matrix. The polypeptide is Cytochrome c oxidase subunit 2 (MT-CO2) (Squalus acanthias (Spiny dogfish)).